We begin with the raw amino-acid sequence, 169 residues long: S-ribosylhomocysteine lyase (169 aa).

Residues H54, H58, and C128 each contribute to the Fe cation site.

It belongs to the LuxS family. As to quaternary structure, homodimer. It depends on Fe cation as a cofactor.

The catalysed reaction is S-(5-deoxy-D-ribos-5-yl)-L-homocysteine = (S)-4,5-dihydroxypentane-2,3-dione + L-homocysteine. Functionally, involved in the synthesis of autoinducer 2 (AI-2) which is secreted by bacteria and is used to communicate both the cell density and the metabolic potential of the environment. The regulation of gene expression in response to changes in cell density is called quorum sensing. Catalyzes the transformation of S-ribosylhomocysteine (RHC) to homocysteine (HC) and 4,5-dihydroxy-2,3-pentadione (DPD). The sequence is that of S-ribosylhomocysteine lyase from Shewanella loihica (strain ATCC BAA-1088 / PV-4).